The sequence spans 630 residues: MITNLADYPLLSQINIPEDLRNMPQEQLTRISNELRSFLLNSVSKSSGHFASGLGTIELTVALHYVYNTPFDHLIWDVGHQAYPHKILTGRRDQLHTIRQKGGLHPFPWREESEYDTLSVGHSSTSISAALGLAVAAEKEAKNRKTVAVIGDGAMTAGMAFEALNHAGDIKKDMLIILNDNDMSISKNVGALNNHLAKLLSGSIFTGFRESSKKLLGNIPPIKELASRAEEHLKGMVVPSTFFEELGFNYIGPIDGHDVESLVTTIKNMRNLKGPQFLHVVTTKGKGYQAAEQDPIKYHAVPKFNPEETNLPQSKPSLPTYSKIFGDWLCKTAEIDKKLVAVTPAMAEGSGMVEFSQRFPDQYYDVAIAEQHSVTYAAGLAIGGLKPVVAIYSSFLQRGYDQFIHDVAIQNLPVMFAIDRAGIVGADGATHQGVFDLSFLRCIPNTVIMAPSNERECQLMLNTGYKLDGPSVVRYPRGNGTGEILPSVDETIELGKGVTILTATVIESQEQTNKSIAILSFGSMLGEAKKAALELNATLVDMRFVKPLDETLIDTLNAKHDCLVTVEDNAIAGGAGSGVNEYLLAQGKPVTILNIGVTDHFVKHGTQEEMHHELELDAEGIVIKIKRFIN.

Residues H80 and 121-123 contribute to the thiamine diphosphate site; that span reads GHS. D152 is a Mg(2+) binding site. Thiamine diphosphate-binding positions include 153 to 154, N181, Y288, and E370; that span reads GA. A Mg(2+)-binding site is contributed by N181.

It belongs to the transketolase family. DXPS subfamily. As to quaternary structure, homodimer. It depends on Mg(2+) as a cofactor. Requires thiamine diphosphate as cofactor.

It carries out the reaction D-glyceraldehyde 3-phosphate + pyruvate + H(+) = 1-deoxy-D-xylulose 5-phosphate + CO2. The protein operates within metabolic intermediate biosynthesis; 1-deoxy-D-xylulose 5-phosphate biosynthesis; 1-deoxy-D-xylulose 5-phosphate from D-glyceraldehyde 3-phosphate and pyruvate: step 1/1. In terms of biological role, catalyzes the acyloin condensation reaction between C atoms 2 and 3 of pyruvate and glyceraldehyde 3-phosphate to yield 1-deoxy-D-xylulose-5-phosphate (DXP). The sequence is that of 1-deoxy-D-xylulose-5-phosphate synthase from Colwellia psychrerythraea (strain 34H / ATCC BAA-681) (Vibrio psychroerythus).